Reading from the N-terminus, the 310-residue chain is 17-beta-hydroxysteroid dehydrogenase type 3 (310 aa).

48–77 lines the NADP(+) pocket; that stretch reads GQWAVITGAGDGIGKAYSFELAKRGLNVVL. Substrate is bound at residue S185. Y198 (proton acceptor) is an active-site residue.

Belongs to the short-chain dehydrogenases/reductases (SDR) family. 17-beta-HSD 3 subfamily. In terms of tissue distribution, testis.

The protein resides in the endoplasmic reticulum. It catalyses the reaction a 17beta-hydroxy steroid + NADP(+) = a 17-oxo steroid + NADPH + H(+). The catalysed reaction is testosterone + NADP(+) = androst-4-ene-3,17-dione + NADPH + H(+). The enzyme catalyses 17beta-estradiol + NADP(+) = estrone + NADPH + H(+). It carries out the reaction 3beta-hydroxyandrost-5-en-17-one + NADPH + H(+) = androst-5-en-3beta,17beta-diol + NADP(+). It catalyses the reaction 17beta-hydroxy-5alpha-androstan-3-one + NADP(+) = 5alpha-androstan-3,17-dione + NADPH + H(+). The catalysed reaction is androsterone + NADPH + H(+) = 5alpha-androstane-3alpha,17beta-diol + NADP(+). The enzyme catalyses 3beta-hydroxy-5alpha-androstan-17-one + NADPH + H(+) = 5alpha-androstane-3beta,17beta-diol + NADP(+). It carries out the reaction androst-4-ene-3,11,17-trione + NADPH + H(+) = 17beta-hydroxyandrost-4-ene-3,11-dione + NADP(+). It catalyses the reaction 11beta-hydroxyandrost-4-ene-3,17-dione + NADPH + H(+) = 11beta,17beta-dihydroxyandrost-4-ene-3-one + NADP(+). Its pathway is hormone biosynthesis; testosterone biosynthesis. It functions in the pathway steroid metabolism. Catalyzes the conversion of 17-oxosteroids to 17beta-hydroxysteroids. Favors the reduction of androstenedione to testosterone. Testosterone is the key androgen driving male development and function. Uses NADPH while the two other EDH17B enzymes use NADH. Androgens such as epiandrosterone, dehydroepiandrosterone, androsterone and androstanedione are accepted as substrates and reduced at C-17. Can reduce 11-ketoandrostenedione as well as 11beta-hydroxyandrostenedione at C-17 to the respective testosterone forms. The protein is 17-beta-hydroxysteroid dehydrogenase type 3 of Homo sapiens (Human).